Reading from the N-terminus, the 249-residue chain is RNA polymerase sigma factor SigI3 (249 aa).

The short motif at 60–73 (EEFSIGLAAFNEAI) is the Polymerase core binding element. The segment at residues 199-218 (MKEVLSRIKVNHKTIQRNRK) is a DNA-binding region (H-T-H motif).

It belongs to the sigma-70 factor family. SigI subfamily. As to quaternary structure, interacts with RsgI3.

It localises to the cytoplasm. Negatively regulated by the anti-sigma-I factor RsgI3. Binding of the polysaccharide substrate to RsgI3 may lead to the release and activation of SigI3. In terms of biological role, sigma factors are initiation factors that promote the attachment of RNA polymerase to specific initiation sites and are then released. This sigma factor is involved in regulation of cellulosomal genes via an external polysaccharide-sensing mechanism. Recognizes the predicted promoters associated with sigI3 itself, pl11, ce12 and cipA. The chain is RNA polymerase sigma factor SigI3 from Acetivibrio thermocellus (strain ATCC 27405 / DSM 1237 / JCM 9322 / NBRC 103400 / NCIMB 10682 / NRRL B-4536 / VPI 7372) (Clostridium thermocellum).